Here is a 336-residue protein sequence, read N- to C-terminus: HTH-type transcriptional repressor PurR (336 aa).

In terms of domain architecture, HTH lacI-type spans 2–56; that stretch reads ATIKDVAKLAGVSTTTVSHVINKTRFVAEDTSKAVWDAIQQLNYSPSAVARSLKV. The H-T-H motif DNA-binding region spans 4 to 23; the sequence is IKDVAKLAGVSTTTVSHVIN. Residues 48–56 mediate DNA binding; that stretch reads SAVARSLKV. Hypoxanthine-binding residues include Tyr73, Lys188, Phe219, and Asp273.

In terms of assembly, homodimer.

Its pathway is purine metabolism; purine nucleotide biosynthesis [regulation]. In terms of biological role, is the main repressor of the genes involved in the de novo synthesis of purine nucleotides, regulating purB, purC, purEK, purF, purHD, purL, purMN and guaBA expression. PurR is allosterically activated to bind its cognate DNA by binding the purine corepressors, hypoxanthine or guanine, thereby effecting transcription repression. This Actinobacillus pleuropneumoniae serotype 3 (strain JL03) protein is HTH-type transcriptional repressor PurR.